Reading from the N-terminus, the 33-residue chain is Photosystem II reaction center protein Psb30 (33 aa).

The helical transmembrane segment at 5-25 (LIAQLTFLTSIIVSGPLVIAL) threads the bilayer.

The protein belongs to the Psb30/Ycf12 family. In terms of assembly, PSII is composed of 1 copy each of membrane proteins PsbA, PsbB, PsbC, PsbD, PsbE, PsbF, PsbH, PsbI, PsbJ, PsbK, PsbL, PsbM, PsbT, PsbX, PsbY, PsbZ, Psb30/Ycf12, peripheral proteins of the oxygen-evolving complex and a large number of cofactors. It forms dimeric complexes.

Its subcellular location is the plastid. It is found in the chloroplast thylakoid membrane. A core subunit of photosystem II (PSII), probably helps stabilize the reaction center. This is Photosystem II reaction center protein Psb30 from Psilotum nudum (Whisk fern).